The primary structure comprises 470 residues: Nuclear receptor subfamily 0 group B member 1 (470 aa).

3 consecutive repeat copies span residues 1–67 (MAGE…YRCC), 68–133 (FCGK…YRCC), and 134–200 (FCGE…YRCC). Residues 1–253 (MAGENHQWQG…RPVALKSPQV (253 aa)) form a 4 X 67 AA tandem repeats region. 3 consecutive short sequence motifs (LXXLL motif) follow at residues 13–17 (LYNML), 80–84 (LYSML), and 146–150 (LYSLL). Residues 201–253 (FCGEDHPQQGSTLYCMPTSTNQAQAAPEERPRAPWWDTSSGALRPVALKSPQV) form a 4; truncated repeat. Positions 205 to 469 (DHPQQGSTLY…DMMLEMLCTK (265 aa)) constitute an NR LBD domain. The short motif at 461–466 (MMLEML) is the AF-2 motif element.

It belongs to the nuclear hormone receptor family. NR0 subfamily. In terms of assembly, homodimer. Interacts with NR5A1, NR5A2, NR0B2 and with COPS2. Interacts with ESRRB; represses ESRRB activity at the GATA6 promoter.

It is found in the nucleus. The protein localises to the cytoplasm. Functionally, nuclear receptor that lacks a DNA-binding domain and acts as a corepressor that inhibits the transcriptional activity of other nuclear receptors through heterodimeric interactions. Component of a cascade required for the development of the hypothalamic-pituitary-adrenal-gonadal axis. May also have a role in the development of the embryo and in the maintenance of embryonic stem cell pluripotency. The protein is Nuclear receptor subfamily 0 group B member 1 (NR0B1) of Pan troglodytes (Chimpanzee).